The following is a 230-amino-acid chain: Antiholin-like protein LrgB (230 aa).

A run of 8 helical transmembrane segments spans residues 5-25 (MTPY…TLLF), 30-50 (GFFL…FLKV), 61-81 (GGKM…IPLY), 92-112 (WQIL…VYIV), 126-146 (MLPQ…IGGI), 149-169 (ITSF…ALFL), 177-197 (PIAK…AVGI), and 209-229 (IAVT…MPFI).

The protein belongs to the CidB/LrgB family. LrgB subfamily.

Its subcellular location is the cell membrane. In terms of biological role, inhibits the expression or activity of extracellular murein hydrolases by interacting, possibly with LrgA, with the holin-like protein CidA. The LrgAB and CidA proteins may affect the proton motive force of the membrane. May be involved in programmed cell death (PCD), possibly triggering PCD in response to antibiotics and environmental stresses. The protein is Antiholin-like protein LrgB of Bacillus mycoides (strain KBAB4) (Bacillus weihenstephanensis).